A 279-amino-acid chain; its full sequence is Large ribosomal subunit protein uL2 (279 aa).

The interval 223–279 is disordered; it reads TVRGSAMNPNDHPHGGGEGRSPVGMDAPRTPWGKRHMGVKTRNNKKSSTSMIVRRRK. Basic residues predominate over residues 254–267; the sequence is WGKRHMGVKTRNNK.

This sequence belongs to the universal ribosomal protein uL2 family. Part of the 50S ribosomal subunit. Forms a bridge to the 30S subunit in the 70S ribosome.

Functionally, one of the primary rRNA binding proteins. Required for association of the 30S and 50S subunits to form the 70S ribosome, for tRNA binding and peptide bond formation. It has been suggested to have peptidyltransferase activity; this is somewhat controversial. Makes several contacts with the 16S rRNA in the 70S ribosome. In Ureaplasma parvum serovar 3 (strain ATCC 27815 / 27 / NCTC 11736), this protein is Large ribosomal subunit protein uL2.